The sequence spans 342 residues: Protein BASIC PENTACYSTEINE6 (342 aa).

Residues 41–67 are a coiled coil; sequence AIQERNLAISEKKAAVAERDMAFLQRD. The alanine-zipper stretch occupies residues 41 to 76; the sequence is AIQERNLAISEKKAAVAERDMAFLQRDTAIAERNNA. Residues 143 to 199 are disordered; sequence REMEPNDGLPTSPPAGSTLESAKPKRGKRVNPKATTQTAANKRGPKNQRKVKKESED. The segment at 164–195 is required for nucleus and nucleolus localization; sequence AKPKRGKRVNPKATTQTAANKRGPKNQRKVKK. The segment covering 185–194 has biased composition (basic residues); sequence RGPKNQRKVK. A Nuclear localization signal motif is present at residues 192-195; the sequence is KVKK.

The protein belongs to the BBR/BPC family. Homodimer. Heterodimer with BPC4. Expressed in seedlings, leaves and pistils. Detected in the base of flowers and tips of carpels, in sepal vasculature, in young rosette, in the lateral and tip of primary roots, and in ovule at the exception of the outer integument.

It localises to the nucleus. The protein localises to the nucleolus. Its function is as follows. Transcriptional regulator that specifically binds to GA-rich elements (GAGA-repeats) present in regulatory sequences of genes involved in developmental processes. This is Protein BASIC PENTACYSTEINE6 (BPC6) from Arabidopsis thaliana (Mouse-ear cress).